Here is a 285-residue protein sequence, read N- to C-terminus: 4-hydroxybenzoate octaprenyltransferase (285 aa).

Helical transmembrane passes span 19–39 (IGSL…ADGL), 42–62 (WHVL…GCVI), 82–102 (LPSG…LVVC), 104–124 (FLLV…GIVL), 136–156 (YLPQ…AYAA), 166–186 (WLLF…YAMV), 210–230 (IIGL…SQLA), 233–253 (GIYY…QWLI), and 265–285 (FLNN…SVLI).

Belongs to the UbiA prenyltransferase family. It depends on Mg(2+) as a cofactor.

Its subcellular location is the cell inner membrane. The catalysed reaction is all-trans-octaprenyl diphosphate + 4-hydroxybenzoate = 4-hydroxy-3-(all-trans-octaprenyl)benzoate + diphosphate. It participates in cofactor biosynthesis; ubiquinone biosynthesis. In terms of biological role, catalyzes the prenylation of para-hydroxybenzoate (PHB) with an all-trans polyprenyl group. Mediates the second step in the final reaction sequence of ubiquinone-8 (UQ-8) biosynthesis, which is the condensation of the polyisoprenoid side chain with PHB, generating the first membrane-bound Q intermediate 3-octaprenyl-4-hydroxybenzoate. The protein is 4-hydroxybenzoate octaprenyltransferase of Aliivibrio fischeri (strain ATCC 700601 / ES114) (Vibrio fischeri).